Consider the following 1156-residue polypeptide: Nuclear pore-associated protein 1 (1156 aa).

8 disordered regions span residues 1-60, 155-204, 219-266, 481-515, 680-703, 732-786, 872-915, and 1026-1046; these read MGNL…RRPS, EGPR…FRCS, NSMS…PEPA, GGSY…TRES, TLVN…MHTT, NTQP…KTSL, STSF…SSFI, and APGP…SGTP. The segment covering 50–59 has biased composition (basic residues); that stretch reads LFRRNARRRP. Residues 156-165 show a composition bias toward basic and acidic residues; it reads GPRRVKKDED. 2 stretches are compositionally biased toward polar residues: residues 179–197 and 219–231; these read PLSS…TQGD and NSMS…SPAS. 4 stretches are compositionally biased toward polar residues: residues 680 to 692, 732 to 750, 884 to 915, and 1028 to 1046; these read TLVN…SSSK, NTQP…SLPA, TTTS…SSFI, and GPSS…SGTP.

In terms of assembly, associates with the nuclear pore complex (NPC). As to expression, testis-specific in adults. In fetal brain expressed only from the paternal allele.

Its subcellular location is the nucleus. The protein localises to the nucleoplasm. It is found in the nucleus inner membrane. May be involved in spermatogenesis. In Homo sapiens (Human), this protein is Nuclear pore-associated protein 1 (NPAP1).